Here is a 426-residue protein sequence, read N- to C-terminus: Glucose-1-phosphate adenylyltransferase (426 aa).

Alpha-D-glucose 1-phosphate-binding positions include tyrosine 100, glycine 165, glutamate 180–lysine 181, and serine 191.

Belongs to the bacterial/plant glucose-1-phosphate adenylyltransferase family. As to quaternary structure, homotetramer.

The enzyme catalyses alpha-D-glucose 1-phosphate + ATP + H(+) = ADP-alpha-D-glucose + diphosphate. It functions in the pathway glycan biosynthesis; glycogen biosynthesis. Functionally, involved in the biosynthesis of ADP-glucose, a building block required for the elongation reactions to produce glycogen. Catalyzes the reaction between ATP and alpha-D-glucose 1-phosphate (G1P) to produce pyrophosphate and ADP-Glc. The polypeptide is Glucose-1-phosphate adenylyltransferase (Acetivibrio thermocellus (strain ATCC 27405 / DSM 1237 / JCM 9322 / NBRC 103400 / NCIMB 10682 / NRRL B-4536 / VPI 7372) (Clostridium thermocellum)).